We begin with the raw amino-acid sequence, 549 residues long: GATA-type transcription factor sreA (549 aa).

A disordered region spans residues 40–100 (AQAGREHPQD…TSPKSQKDTS (61 aa)). 2 stretches are compositionally biased toward basic and acidic residues: residues 43–72 (GREH…HEGE) and 86–97 (HHVEKTSPKSQK). The GATA-type 1 zinc-finger motif lies at 106 to 130 (CSNCGTKSTPLWRRSPTGAMICNAC). The tract at residues 141 to 174 (RPTKRNRTQASPEAYHPQNQSVGSQPDPAVTGSE) is disordered. The segment at 180-198 (CPGGGNCNGTGGAEGCDGC) is cystein-rich region (CRR). The segment at 223–244 (GNSDAVPSPEAEAPARNSGQPE) is disordered. Residues 251-275 (CQNCGTTVTPLWRRDENGHPICNAC) form a GATA-type 2 zinc finger. 3 disordered regions span residues 306–332 (RENS…PATL), 375–459 (NSGA…RLSS), and 482–535 (LGRQ…MREQ). Positions 309 to 331 (SPTAATHSSHGSSASPEASSPAT) are enriched in low complexity. Over residues 383-396 (HHPPPPRLLEPGHP) the composition is skewed to pro residues. The span at 485 to 497 (QQQSQPHHPQSSP) shows a compositional bias: low complexity. Polar residues predominate over residues 498 to 515 (LAPTQAASQSLPGVSNMD). Residues 511–549 (VSNMDNHVEDRRAKLQREAEEMREQLRAKERELAELAGQ) adopt a coiled-coil conformation. Basic and acidic residues predominate over residues 516–535 (NHVEDRRAKLQREAEEMREQ).

The protein resides in the nucleus. Functionally, GATA-type transcription repressor that regulates iron- acquisition genes through specific binding GATA sequence elements of target promoters. Iron acquisition regulation is critical for survival under both iron-limiting conditions (to acquire essential iron) and iron-replete conditions (to limit iron toxicity). SreA targets include genes encoding a number of key iron-regulated factors such as those involved in siderophore biosynthesis. The protein is GATA-type transcription factor sreA of Emericella nidulans (strain FGSC A4 / ATCC 38163 / CBS 112.46 / NRRL 194 / M139) (Aspergillus nidulans).